Consider the following 44-residue polypeptide: Cytochrome b559 subunit beta (44 aa).

The chain crosses the membrane as a helical span at residues 19 to 35; it reads WVSIHALAVPTIFFLGS. A heme-binding site is contributed by histidine 23.

It belongs to the PsbE/PsbF family. Heterodimer of an alpha subunit and a beta subunit. PSII is composed of 1 copy each of membrane proteins PsbA, PsbB, PsbC, PsbD, PsbE, PsbF, PsbH, PsbI, PsbJ, PsbK, PsbL, PsbM, PsbT, PsbX, PsbY, PsbZ, Psb30/Ycf12, at least 3 peripheral proteins of the oxygen-evolving complex and a large number of cofactors. It forms dimeric complexes. Heme b serves as cofactor.

Its subcellular location is the plastid. The protein localises to the chloroplast thylakoid membrane. In terms of biological role, this b-type cytochrome is tightly associated with the reaction center of photosystem II (PSII). PSII is a light-driven water:plastoquinone oxidoreductase that uses light energy to abstract electrons from H(2)O, generating O(2) and a proton gradient subsequently used for ATP formation. It consists of a core antenna complex that captures photons, and an electron transfer chain that converts photonic excitation into a charge separation. This is Cytochrome b559 subunit beta from Chlamydomonas moewusii (Chlamydomonas eugametos).